A 431-amino-acid chain; its full sequence is Eukaryotic translation initiation factor 5 (431 aa).

S10 is subject to Phosphoserine. Residue G27 to T34 coordinates GTP. The disordered stretch occupies residues K143 to M216. The span at T153 to N170 shows a compositional bias: basic and acidic residues. The span at T178–H193 shows a compositional bias: pro residues. Acidic residues predominate over residues E196–E209. T227 bears the Phosphothreonine mark. Residues S229, S389, S390, and S410 each carry the phosphoserine modification. The region spanning E233 to G392 is the W2 domain. Glycyl lysine isopeptide (Lys-Gly) (interchain with G-Cter in SUMO2) cross-links involve residues K413 and K418. S419 carries the post-translational modification Phosphoserine.

This sequence belongs to the eIF-2-beta/eIF-5 family. Component of the 43S pre-initiation complex (43S PIC), which is composed of the 40S ribosomal subunit, EIF1, eIF1A (EIF1AX), eIF3 complex, EIF5 and eIF2-GTP-initiator tRNA complex (eIF2 ternary complex). Interacts with eIF1A (EIF1AX) during scanning. Interacts through its C-terminal domain (CTD) with EIF1 or with eIF2-beta (EIF2S2) (mutually exclusive) through a common binding site. Interacts through its C-terminal domain (CTD) with the CTD of EIF5B. Interacts with FMR1 isoform 6; this interaction occurs in a RNA-dependent manner.

The protein localises to the cytoplasm. Functionally, component of the 43S pre-initiation complex (43S PIC), which binds to the mRNA cap-proximal region, scans mRNA 5'-untranslated region, and locates the initiation codon. In this complex, acts as a GTPase-activating protein, by promoting GTP hydrolysis by eIF2G (EIF2S3). During scanning, interacts with both EIF1 (via its C-terminal domain (CTD)) and EIF1A (via its NTD). This interaction with EIF1A contributes to the maintenance of EIF1 within the open 43S PIC. When start codon is recognized, EIF5, via its NTD, induces eIF2G (EIF2S3) to hydrolyze the GTP. Start codon recognition also induces a conformational change of the PIC to a closed state. This change increases the affinity of EIF5-CTD for EIF2-beta (EIF2S2), which allows the release, by an indirect mechanism, of EIF1 from the PIC. Finally, EIF5 stabilizes the PIC in its closed conformation. This Pongo abelii (Sumatran orangutan) protein is Eukaryotic translation initiation factor 5 (EIF5).